The following is a 286-amino-acid chain: 2-dehydro-3-deoxyphosphooctonate aldolase (286 aa).

This sequence belongs to the KdsA family.

Its subcellular location is the cytoplasm. The catalysed reaction is D-arabinose 5-phosphate + phosphoenolpyruvate + H2O = 3-deoxy-alpha-D-manno-2-octulosonate-8-phosphate + phosphate. Its pathway is carbohydrate biosynthesis; 3-deoxy-D-manno-octulosonate biosynthesis; 3-deoxy-D-manno-octulosonate from D-ribulose 5-phosphate: step 2/3. The protein operates within bacterial outer membrane biogenesis; lipopolysaccharide biosynthesis. This is 2-dehydro-3-deoxyphosphooctonate aldolase from Bradyrhizobium sp. (strain BTAi1 / ATCC BAA-1182).